The sequence spans 239 residues: Probable transcriptional regulatory protein Tcr_1104 (239 aa).

This sequence belongs to the TACO1 family.

It is found in the cytoplasm. The protein is Probable transcriptional regulatory protein Tcr_1104 of Hydrogenovibrio crunogenus (strain DSM 25203 / XCL-2) (Thiomicrospira crunogena).